Consider the following 294-residue polypeptide: Deubiquitinase OTUD6B (294 aa).

Positions 85–120 (VTSLDLGSEEPVQQPRVSKAQKRREKKAAQEKERDD) are disordered. Over residues 111-120 (KAAQEKERDD) the composition is skewed to basic and acidic residues. The region spanning 150–287 (LQIRQIPSDG…GEHYNSVEQL (138 aa)) is the OTU domain. The segment at 155-161 (IPSDGHC) is cys-loop. Aspartate 158 is a catalytic residue. The active-site Nucleophile is cysteine 161. Residues 222 to 232 (IVNTPAWGGQL) form a variable-loop region. Residues 270 to 280 (YMRHAYGLGEH) are his-loop. The active site involves histidine 280.

The enzyme catalyses Thiol-dependent hydrolysis of ester, thioester, amide, peptide and isopeptide bonds formed by the C-terminal Gly of ubiquitin (a 76-residue protein attached to proteins as an intracellular targeting signal).. Deubiquitinating enzyme that may play a role in the ubiquitin-dependent regulation of different cellular processes. The sequence is that of Deubiquitinase OTUD6B (otud6b) from Xenopus laevis (African clawed frog).